We begin with the raw amino-acid sequence, 254 residues long: Mediator of RNA polymerase II transcription subunit 8 (254 aa).

Residues 154–190 (LEEREMGIQNVVTGLRRQLEDDERDEDEDEDDEEEEE) are a coiled coil. The disordered stretch occupies residues 167 to 234 (GLRRQLEDDE…SQQVQKGAGP (68 aa)). Acidic residues predominate over residues 173 to 199 (EDDERDEDEDEDDEEEEEGEGEDEEME).

The protein belongs to the Mediator complex subunit 8 family. In terms of assembly, component of the Mediator complex.

The protein localises to the nucleus. Component of the Mediator complex, a coactivator involved in the regulated transcription of nearly all RNA polymerase II-dependent genes. Mediator functions as a bridge to convey information from gene-specific regulatory proteins to the basal RNA polymerase II transcription machinery. Mediator is recruited to promoters by direct interactions with regulatory proteins and serves as a scaffold for the assembly of a functional preinitiation complex with RNA polymerase II and the general transcription factors. The polypeptide is Mediator of RNA polymerase II transcription subunit 8 (med8) (Aspergillus clavatus (strain ATCC 1007 / CBS 513.65 / DSM 816 / NCTC 3887 / NRRL 1 / QM 1276 / 107)).